The following is a 378-amino-acid chain: tRNA-specific 2-thiouridylase MnmA (378 aa).

ATP contacts are provided by residues 27 to 34 (AMSGGVDS) and Leu53. Catalysis depends on Cys121, which acts as the Nucleophile. Cys121 and Cys218 are joined by a disulfide. Residue Gly145 participates in ATP binding. The tract at residues 168 to 170 (RDQ) is interaction with tRNA. Residue Cys218 is the Cysteine persulfide intermediate of the active site.

This sequence belongs to the MnmA/TRMU family.

It localises to the cytoplasm. The catalysed reaction is S-sulfanyl-L-cysteinyl-[protein] + uridine(34) in tRNA + AH2 + ATP = 2-thiouridine(34) in tRNA + L-cysteinyl-[protein] + A + AMP + diphosphate + H(+). Catalyzes the 2-thiolation of uridine at the wobble position (U34) of tRNA, leading to the formation of s(2)U34. In Rhizorhabdus wittichii (strain DSM 6014 / CCUG 31198 / JCM 15750 / NBRC 105917 / EY 4224 / RW1) (Sphingomonas wittichii), this protein is tRNA-specific 2-thiouridylase MnmA.